Consider the following 620-residue polypeptide: 1-deoxy-D-xylulose-5-phosphate synthase (620 aa).

Residues His80 and 121-123 contribute to the thiamine diphosphate site; that span reads GHS. Asp152 contributes to the Mg(2+) binding site. Residues 153–154, Asn181, Tyr288, and Glu370 contribute to the thiamine diphosphate site; that span reads GA. Asn181 provides a ligand contact to Mg(2+).

It belongs to the transketolase family. DXPS subfamily. Homodimer. Mg(2+) is required as a cofactor. The cofactor is thiamine diphosphate.

It carries out the reaction D-glyceraldehyde 3-phosphate + pyruvate + H(+) = 1-deoxy-D-xylulose 5-phosphate + CO2. The protein operates within metabolic intermediate biosynthesis; 1-deoxy-D-xylulose 5-phosphate biosynthesis; 1-deoxy-D-xylulose 5-phosphate from D-glyceraldehyde 3-phosphate and pyruvate: step 1/1. Functionally, catalyzes the acyloin condensation reaction between C atoms 2 and 3 of pyruvate and glyceraldehyde 3-phosphate to yield 1-deoxy-D-xylulose-5-phosphate (DXP). This Escherichia coli O157:H7 protein is 1-deoxy-D-xylulose-5-phosphate synthase.